We begin with the raw amino-acid sequence, 195 residues long: MVTVVAETLTKESFEEYGTIISPDEEISRMQNLEKGANQGTAIKLLQVSQVENKSTSKVPNWNLFRCFPQPHLNRVFTQGSNQAISHSIKVLEKHPCSTQTFVPMGRTSAEVAYLVVVAKEIGNKPDLSTLRAFTCLGNQAVTYGLGTWHAPMIVLGKEEHLDFSVLIYESLDPDRPEKDCVEEHYSDGDVCIII.

The protein belongs to the ureidoglycolate lyase family. As to quaternary structure, homodimer.

It catalyses the reaction (S)-ureidoglycolate = urea + glyoxylate. It functions in the pathway nitrogen metabolism; (S)-allantoin degradation. Its function is as follows. Catalyzes the catabolism of the allantoin degradation intermediate (S)-ureidoglycolate, generating urea and glyoxylate. Involved in the utilization of allantoin as secondary nitrogen source when primary sources are limiting. This Saccharomyces cerevisiae (strain ATCC 204508 / S288c) (Baker's yeast) protein is Ureidoglycolate lyase (DAL3).